Consider the following 259-residue polypeptide: Thiazole synthase (259 aa).

Residue lysine 98 is the Schiff-base intermediate with DXP of the active site. Residues glycine 159, 185–186 (AG), and 207–208 (NS) contribute to the 1-deoxy-D-xylulose 5-phosphate site.

Belongs to the ThiG family. As to quaternary structure, homotetramer. Forms heterodimers with either ThiH or ThiS.

Its subcellular location is the cytoplasm. The enzyme catalyses [ThiS sulfur-carrier protein]-C-terminal-Gly-aminoethanethioate + 2-iminoacetate + 1-deoxy-D-xylulose 5-phosphate = [ThiS sulfur-carrier protein]-C-terminal Gly-Gly + 2-[(2R,5Z)-2-carboxy-4-methylthiazol-5(2H)-ylidene]ethyl phosphate + 2 H2O + H(+). It participates in cofactor biosynthesis; thiamine diphosphate biosynthesis. Functionally, catalyzes the rearrangement of 1-deoxy-D-xylulose 5-phosphate (DXP) to produce the thiazole phosphate moiety of thiamine. Sulfur is provided by the thiocarboxylate moiety of the carrier protein ThiS. In vitro, sulfur can be provided by H(2)S. This is Thiazole synthase from Chlorobium limicola (strain DSM 245 / NBRC 103803 / 6330).